Reading from the N-terminus, the 296-residue chain is Large ribosomal subunit protein uL18B (296 aa).

Positions 251–296 are disordered; the sequence is PVHEKKPKKEVKKKRWNRAKLSLEQKKDRVAQKKASFLRAQEKADS. Residues 255-268 show a composition bias toward basic residues; sequence KKPKKEVKKKRWNR. A compositionally biased stretch (basic and acidic residues) spans 271–281; that stretch reads LSLEQKKDRVA.

It belongs to the universal ribosomal protein uL18 family. As to quaternary structure, component of the large ribosomal subunit (LSU). Part of a LSU subcomplex, the 5S RNP which is composed of the 5S RNA, RPL5 and RPL11.

It localises to the cytoplasm. It is found in the nucleus. The protein localises to the nucleolus. In terms of biological role, component of the ribosome, a large ribonucleoprotein complex responsible for the synthesis of proteins in the cell. The small ribosomal subunit (SSU) binds messenger RNAs (mRNAs) and translates the encoded message by selecting cognate aminoacyl-transfer RNA (tRNA) molecules. The large subunit (LSU) contains the ribosomal catalytic site termed the peptidyl transferase center (PTC), which catalyzes the formation of peptide bonds, thereby polymerizing the amino acids delivered by tRNAs into a polypeptide chain. The nascent polypeptides leave the ribosome through a tunnel in the LSU and interact with protein factors that function in enzymatic processing, targeting, and the membrane insertion of nascent chains at the exit of the ribosomal tunnel. As part of the 5S RNP/5S ribonucleoprotein particle it is an essential component of the LSU, required for its formation and the maturation of rRNAs. It also couples ribosome biogenesis to p53/TP53 activation. As part of the 5S RNP it accumulates in the nucleoplasm and inhibits MDM2, when ribosome biogenesis is perturbed, mediating the stabilization and the activation of TP53. The protein is Large ribosomal subunit protein uL18B (rpl5-b) of Xenopus laevis (African clawed frog).